Consider the following 990-residue polypeptide: Serine/threonine-protein kinase ATG1 (990 aa).

One can recognise a Protein kinase domain in the interval 15–334 (FVIENEIGKG…FDDFFASPVI (320 aa)). ATP is bound by residues 21–29 (IGKGSFAVV) and Lys44. The active-site Proton acceptor is the Asp165. The span at 375–408 (VSSIEASTQQPGVQPPVSTATSPPALESRSTQEA) shows a compositional bias: polar residues. 5 disordered regions span residues 375 to 499 (VSSI…GGED), 529 to 566 (SRLG…TILS), 579 to 614 (ASTG…QGGQ), 750 to 784 (LSQE…SSSS), and 970 to 990 (SPVG…TESP). 2 stretches are compositionally biased toward low complexity: residues 529-554 (SRLG…SAPG) and 587-613 (PPGS…RQGG). Residues 750–771 (LSQELDSSTATSGISPSRNSVQ) show a composition bias toward polar residues. Residues 772-784 (GSARRVGSISSSS) show a composition bias toward low complexity.

This sequence belongs to the protein kinase superfamily. Ser/Thr protein kinase family. APG1/unc-51/ULK1 subfamily. Homodimer. Forms a ternary complex with ATG13 and ATG17.

The protein localises to the cytoplasm. The protein resides in the preautophagosomal structure membrane. It carries out the reaction L-seryl-[protein] + ATP = O-phospho-L-seryl-[protein] + ADP + H(+). The catalysed reaction is L-threonyl-[protein] + ATP = O-phospho-L-threonyl-[protein] + ADP + H(+). Serine/threonine protein kinase involved in the cytoplasm to vacuole transport (Cvt) and found to be essential in autophagy, where it is required for the formation of autophagosomes. Involved in the clearance of protein aggregates which cannot be efficiently cleared by the proteasome. Required for selective autophagic degradation of the nucleus (nucleophagy) as well as for mitophagy which contributes to regulate mitochondrial quantity and quality by eliminating the mitochondria to a basal level to fulfill cellular energy requirements and preventing excess ROS production. Also involved in endoplasmic reticulum-specific autophagic process, in selective removal of ER-associated degradation (ERAD) substrates. Plays a key role in ATG9 and ATG23 cycling through the pre-autophagosomal structure and is necessary to promote ATG18 binding to ATG9 through phosphorylation of ATG9. Catalyzes phosphorylation of ATG4, decreasing the interaction between ATG4 and ATG8 and impairing deconjugation of PE-conjugated forms of ATG8. Required for wild-type budding of haploid sporidia and for complete symptom development during pathogenic growth such as gall formation and teliospore production in ears of mature maize. This Mycosarcoma maydis (Corn smut fungus) protein is Serine/threonine-protein kinase ATG1.